The sequence spans 207 residues: MSERLLVLVRHGQSEWNLKNLFTGWKDPDLTAQGVSEAKDAGRKLKAHGLSFDVAFTSELTRAQHTLKLILDELGQPGLPTSKNLALNERDYGDLSGLNKDDARAKWGEEQVHVWRRSYDVPPPGGESLKDTLARALPYYVQEILPGVLNGQRTLVAAHGNSLRALIMVLEKLTPEGILKRELATGVPIIYRLKADSTVESKLDLAG.

Substrate-binding positions include 10 to 17 (RHGQSEWN), 23 to 24 (TG), Arg-62, 89 to 92 (ERDY), Lys-100, 116 to 117 (RR), and 160 to 161 (GN). The active-site Tele-phosphohistidine intermediate is His-11. Glu-89 functions as the Proton donor/acceptor in the catalytic mechanism.

It belongs to the phosphoglycerate mutase family. BPG-dependent PGAM subfamily. In terms of assembly, homodimer.

It catalyses the reaction (2R)-2-phosphoglycerate = (2R)-3-phosphoglycerate. It functions in the pathway carbohydrate degradation; glycolysis; pyruvate from D-glyceraldehyde 3-phosphate: step 3/5. Functionally, catalyzes the interconversion of 2-phosphoglycerate and 3-phosphoglycerate. In Bradyrhizobium sp. (strain ORS 278), this protein is 2,3-bisphosphoglycerate-dependent phosphoglycerate mutase.